The following is a 249-amino-acid chain: DNA repair protein RecO (249 aa).

Belongs to the RecO family.

Its function is as follows. Involved in DNA repair and RecF pathway recombination. This chain is DNA repair protein RecO, found in Polaromonas sp. (strain JS666 / ATCC BAA-500).